The sequence spans 627 residues: MATQEFQAETKRLLDIVINSIYSNKEIFLRELISNASDAIDKLYYKSLTDNSLDFNKDDYYIKITVDKENRQLKISDTGIGMTRQELEDNIGVIARSGSLDFKKANEQEIKDGHDIIGQFGVGFYSAFMVAEEVTIISKAYGSDHAYKWESEGIEGYSVSPTEKESVGTDVILKIKENTDDEDYDQYLDEHRLKSIVKKYSDFIRYPIKMDLTKSKPKDDNEEEYEEYIEEETVNTMVPIWERNKNELTDEDYKNFYRERHYGFDEPITHIHINAEGTISFKAVLFIPERPPFNFYTKEFEKGLELYSNGVLIMNKCPDLLPDYFSFVRGVVDSEDLSLNISREMLQQDKQLKLIAKNIKNKVKKELKNVMENDREKYEEFFESFGTLLKYGIYSEFGQNKETLQDLLLFYSSKENKMVSLDEYISRMGEDQKYIYYATGESVERIDKLPQTEFVKDKGYEVLYLTEDVDEFAIKMMGSYQDVEFKSVSSKDLGLDSEDEETSDEKEKEYKGMFDKMAEILSDKVNTVRASERLKDHPVCLANEGEISIEMEKVLQSMPNNQNVQAEKALEINVNHDVFDKLTEAYEQDEDKFKLYTDLLYNQACLIEGLPIEDPVKYTNNVCKIMS.

The interval 1–343 (MATQEFQAET…SEDLSLNISR (343 aa)) is a; substrate-binding. The b stretch occupies residues 344-553 (EMLQQDKQLK…EGEISIEMEK (210 aa)). Residues 554–627 (VLQSMPNNQN…YTNNVCKIMS (74 aa)) form a c region.

It belongs to the heat shock protein 90 family. As to quaternary structure, homodimer.

It localises to the cytoplasm. In terms of biological role, molecular chaperone. Has ATPase activity. The polypeptide is Chaperone protein HtpG (Natranaerobius thermophilus (strain ATCC BAA-1301 / DSM 18059 / JW/NM-WN-LF)).